A 457-amino-acid polypeptide reads, in one-letter code: Ig mu chain C region (457 aa).

Residues 1–105 are CH1; sequence SSSAPLLFPL…GEKEKKVELQ (105 aa). C27 and C89 are disulfide-bonded. 2 N-linked (GlcNAc...) asparagine glycosylation sites follow: N45 and N113. Residues 106 to 220 form a CH2 region; that stretch reads VTPELPPNVS…KNVSSVCMGD (115 aa). A disulfide bridge connects residues C136 and C200. N-linked (GlcNAc...) asparagine glycosylation is found at N212, N276, and N283. The CH3 stretch occupies residues 221-326; it reads DTSTGISVFL…PLKQSLSRPK (106 aa). Cystine bridges form between C248/C307 and C355/C417. The CH4 stretch occupies residues 327 to 457; that stretch reads DVANDPPSVF…VLSDTASTCY (131 aa). N444 is a glycosylation site (N-linked (GlcNAc...) asparagine).

This chain is Ig mu chain C region, found in Suncus murinus (Asian house shrew).